The chain runs to 149 residues: UPF0208 membrane protein PBPRA2797 (149 aa).

The next 2 helical transmembrane spans lie at 41–60 and 65–87; these read FATR…QMAF and ALPQ…LWWL.

This sequence belongs to the UPF0208 family.

The protein localises to the cell inner membrane. This is UPF0208 membrane protein PBPRA2797 from Photobacterium profundum (strain SS9).